A 669-amino-acid polypeptide reads, in one-letter code: Glutaminase kidney isoform, mitochondrial (669 aa).

Residues 1–54 constitute a mitochondrion transit peptide; the sequence is MMRLRGSGMLRDLLLRSPAGVSATLRRAQPLVTLCRRPRGGGRPAAGPAAAARL. A disordered region spans residues 68-118; that stretch reads LARGLSSSPSEILQELGKGSTHPQPGVSPPAAPAAPGPKDGPGETDAFGNS. A compositionally biased stretch (pro residues) spans 93-103; it reads GVSPPAAPAAP. Residues K130 and K164 each carry the N6-succinyllysine modification. Position 286 (S286) interacts with substrate. Residue K311 is modified to N6-acetyllysine. The highly mobile activation loop stretch occupies residues 315–322; it reads GLRFNKLF. The substrate site is built by N335, E381, N388, Y414, Y466, and V484. ANK repeat units follow at residues 585–614 and 619–648; these read DSRT…VNPF and WNNT…QYTP. A disordered region spans residues 647 to 669; that stretch reads TPQGDSDNGKENQTVHKNLDGLL. Phosphoserine is present on S652. The span at 653 to 669 shows a compositional bias: basic and acidic residues; it reads DNGKENQTVHKNLDGLL.

This sequence belongs to the glutaminase family. In terms of assembly, homotetramer, dimer of dimers. The tetramers can assemble into rod-like oligomers (in vitro), but the physiological significance of this is not clear. Interacts with RAF1 and MAP2K2. Interacts with ATCAY; the interaction is direct and may control GLS localization, negatively regulating its activity. Post-translationally, synthesized as a 74-kDa cytosolic precursor which is proteolytically processed by the mitochondrial-processing peptidase (MPP) via a 72-kDa intermediate to yield the mature mitochondrial 68- and 65-kDa subunits. Isoform 1 and isoform 3 are detected in brain cortex. Isoform 3 is highly expressed in astrocytoma, ganglioglioma and ependymoma. Isoform 1 is highly expressed in brain and kidney, but not detected in liver. Isoform 3 is highly expressed in heart and pancreas, detected at lower levels in placenta, lung, pancreas and kidney, but is not detected in liver. Isoform 2 is expressed in cardiac and skeletal muscle.

Its subcellular location is the mitochondrion. It localises to the cytoplasm. The protein resides in the cytosol. The protein localises to the mitochondrion matrix. The catalysed reaction is L-glutamine + H2O = L-glutamate + NH4(+). Its activity is regulated as follows. Isoform 1 and isoform 3 are activated by phosphate. Inhibited by BPTES. BPTES binds between subunits and favors dissociation of the tetramer into dimers. Inhibited by 6-diazo-5-oxo-L-norleucine (DON). Enzyme activity is stimulated by phosphorylation. Functionally, catalyzes the first reaction in the primary pathway for the renal catabolism of glutamine. Plays a role in maintaining acid-base homeostasis. Regulates the levels of the neurotransmitter glutamate, the main excitatory neurotransmitter in the brain. In terms of biological role, lacks catalytic activity. This chain is Glutaminase kidney isoform, mitochondrial (GLS), found in Homo sapiens (Human).